A 332-amino-acid chain; its full sequence is L-lactate dehydrogenase A-like 6A (332 aa).

An N-acetylalanine modification is found at Ala2. Lys5 and Lys57 each carry N6-acetyllysine; alternate. Residue Lys5 is modified to N6-succinyllysine; alternate. 29–57 (GSVGVACAISILLKGLSDELVLVDVDEGK) contributes to the NAD(+) binding site. Lys57 participates in a covalent cross-link: Glycyl lysine isopeptide (Lys-Gly) (interchain with G-Cter in SUMO2); alternate. Lys81 is modified (N6-acetyllysine). NAD(+) is bound at residue Arg99. Arg106 lines the substrate pocket. The residue at position 118 (Lys118) is an N6-acetyllysine; alternate. An N6-succinyllysine; alternate modification is found at Lys118. Asn138 is an NAD(+) binding site. Residues Asn138 and Arg169 each coordinate substrate. His193 (proton acceptor) is an active-site residue. Position 232 is an N6-acetyllysine (Lys232). Tyr239 bears the Phosphotyrosine mark. Residue Lys243 is modified to N6-acetyllysine. Substrate is bound at residue Thr248. The residue at position 309 (Thr309) is a Phosphothreonine. N6-acetyllysine; alternate is present on Lys318. At Lys318 the chain carries N6-succinyllysine; alternate. At Thr322 the chain carries Phosphothreonine.

Belongs to the LDH/MDH superfamily. LDH family. Testis-specific.

Its subcellular location is the cytoplasm. The enzyme catalyses (S)-lactate + NAD(+) = pyruvate + NADH + H(+). Its pathway is fermentation; pyruvate fermentation to lactate; (S)-lactate from pyruvate: step 1/1. Catalyzes the interconversion of L-lactate and pyruvate with nicotinamide adenine dinucleotide NAD(+) as a coenzyme. Significantly increases the transcriptional activity of JUN, when overexpressed. This Homo sapiens (Human) protein is L-lactate dehydrogenase A-like 6A (LDHAL6A).